The following is an 81-amino-acid chain: MTLFSFFLVILSFYYILFSLLGRNYLIFIYIKIIPTVSYFHFNHHFFKLKFRNAKHIIVYFSRKHNFQHQALFVLYYLYSI.

Helical transmembrane passes span 1-21 (MTLF…FSLL) and 27-47 (IFIY…HHFF).

Its subcellular location is the membrane. This is an uncharacterized protein from Saccharomyces cerevisiae (strain ATCC 204508 / S288c) (Baker's yeast).